Here is a 309-residue protein sequence, read N- to C-terminus: Porphobilinogen deaminase (309 aa).

Cysteine 241 is subject to S-(dipyrrolylmethanemethyl)cysteine.

It belongs to the HMBS family. As to quaternary structure, monomer. It depends on dipyrromethane as a cofactor.

The catalysed reaction is 4 porphobilinogen + H2O = hydroxymethylbilane + 4 NH4(+). It participates in porphyrin-containing compound metabolism; protoporphyrin-IX biosynthesis; coproporphyrinogen-III from 5-aminolevulinate: step 2/4. In terms of biological role, tetrapolymerization of the monopyrrole PBG into the hydroxymethylbilane pre-uroporphyrinogen in several discrete steps. This is Porphobilinogen deaminase from Bacillus cereus (strain G9842).